The primary structure comprises 571 residues: Plastidial pyruvate kinase 3, chloroplastic (571 aa).

The N-terminal 55 residues, 1–55 (MAAYGQISSGMTVDPQVLSSSRNIGVSLSPLRRTLIGAGVRSTSISLRQCSLSVR), are a transit peptide targeting the chloroplast. Arginine 129 serves as a coordination point for substrate. The K(+) site is built by asparagine 131, serine 133, aspartate 164, and threonine 165. 131–134 (NMSH) provides a ligand contact to ATP. Arginine 171 serves as a coordination point for ATP. Lysine 314 contributes to the substrate binding site. Glutamate 316 lines the Mg(2+) pocket. Residues glycine 339, aspartate 340, and threonine 372 each coordinate substrate. Position 340 (aspartate 340) interacts with Mg(2+).

The protein belongs to the pyruvate kinase family. As to quaternary structure, oligomer of alpha and beta subunits. The cofactor is Mg(2+). K(+) serves as cofactor. Expressed at low levels in roots, leaves, inflorescences, siliques, pollen, seeds and flowers.

It is found in the plastid. The protein resides in the chloroplast stroma. The enzyme catalyses pyruvate + ATP = phosphoenolpyruvate + ADP + H(+). Its pathway is carbohydrate degradation; glycolysis; pyruvate from D-glyceraldehyde 3-phosphate: step 5/5. Required for plastidial pyruvate kinase activity. This is Plastidial pyruvate kinase 3, chloroplastic (PKP3) from Arabidopsis thaliana (Mouse-ear cress).